Reading from the N-terminus, the 365-residue chain is Aminomethyltransferase (365 aa).

It belongs to the GcvT family. The glycine cleavage system is composed of four proteins: P, T, L and H.

It carries out the reaction N(6)-[(R)-S(8)-aminomethyldihydrolipoyl]-L-lysyl-[protein] + (6S)-5,6,7,8-tetrahydrofolate = N(6)-[(R)-dihydrolipoyl]-L-lysyl-[protein] + (6R)-5,10-methylene-5,6,7,8-tetrahydrofolate + NH4(+). Its function is as follows. The glycine cleavage system catalyzes the degradation of glycine. This is Aminomethyltransferase from Yersinia pestis bv. Antiqua (strain Antiqua).